A 142-amino-acid chain; its full sequence is Large-conductance mechanosensitive channel (142 aa).

The next 2 membrane-spanning stretches (helical) occupy residues 14 to 34 and 82 to 102; these read VMDL…VDSV and GNFI…FLLI.

This sequence belongs to the MscL family. As to quaternary structure, homopentamer.

It is found in the cell inner membrane. Its function is as follows. Channel that opens in response to stretch forces in the membrane lipid bilayer. May participate in the regulation of osmotic pressure changes within the cell. In Sinorhizobium medicae (strain WSM419) (Ensifer medicae), this protein is Large-conductance mechanosensitive channel.